A 230-amino-acid chain; its full sequence is Large ribosomal subunit protein uL1 (230 aa).

Belongs to the universal ribosomal protein uL1 family. As to quaternary structure, part of the 50S ribosomal subunit.

Its function is as follows. Binds directly to 23S rRNA. The L1 stalk is quite mobile in the ribosome, and is involved in E site tRNA release. Functionally, protein L1 is also a translational repressor protein, it controls the translation of the L11 operon by binding to its mRNA. The chain is Large ribosomal subunit protein uL1 from Aster yellows witches'-broom phytoplasma (strain AYWB).